The sequence spans 349 residues: Phenylalanine--tRNA ligase alpha subunit (349 aa).

Residue Glu-259 participates in Mg(2+) binding.

This sequence belongs to the class-II aminoacyl-tRNA synthetase family. Phe-tRNA synthetase alpha subunit type 1 subfamily. In terms of assembly, tetramer of two alpha and two beta subunits. The cofactor is Mg(2+).

It localises to the cytoplasm. It catalyses the reaction tRNA(Phe) + L-phenylalanine + ATP = L-phenylalanyl-tRNA(Phe) + AMP + diphosphate + H(+). The polypeptide is Phenylalanine--tRNA ligase alpha subunit (Lactobacillus helveticus (strain DPC 4571)).